Consider the following 395-residue polypeptide: ATP-dependent RNA helicase eIF4A (395 aa).

A Q motif motif is present at residues 22–50 (TSFDDLGLKDELLRGIYGYGFENPSSIQQ). The Helicase ATP-binding domain occupies 53–223 (ILPVIKGNDV…GKFMRDPVRI (171 aa)). 66–73 (AQSGTGKT) contacts ATP. The short motif at 171–174 (DEAD) is the DEAD box element. The region spanning 234–395 (GIKQFYIDVE…EMPTNIADLI (162 aa)) is the Helicase C-terminal domain.

The protein belongs to the DEAD box helicase family. eIF4A subfamily. In terms of assembly, component of the eIF4F complex, which composition varies with external and internal environmental conditions. It is composed of at least eIF4A, eIF4E and eIF4G.

It localises to the cytoplasm. The catalysed reaction is ATP + H2O = ADP + phosphate + H(+). In terms of biological role, ATP-dependent RNA helicase which is a subunit of the eIF4F complex involved in cap recognition and is required for mRNA binding to ribosome. In the current model of translation initiation, eIF4A unwinds RNA secondary structures in the 5'-UTR of mRNAs which is necessary to allow efficient binding of the small ribosomal subunit, and subsequent scanning for the initiator codon. The sequence is that of ATP-dependent RNA helicase eIF4A (TIF1) from Yarrowia lipolytica (strain CLIB 122 / E 150) (Yeast).